The following is a 406-amino-acid chain: MAFWIYVVPPLAGLVIGYFTNDIAIKMLFRPYRPYRVFGWRIPFTPGLIPQNQPRLAKQIAKTIMGSLLTPEELHNLARKLLQTERMQAGIRWLLGVALDRLQNPEQQQQTAQVLARILADLFNESLPRLVKVLARQETFLEGPINQLFDQVLLELRLSSEQAKQLSEWILKQALPPKVLRQNLVDFLTDRNIESLDEEFRERATGSYWVVANLFGLKNALLRLRTYCLEEPEGAEAILEDLLKDINASRRLTEILQNLSLQNLPVSAVRQLRRALRDGIQDYLRSQGPEVIKGLGETIDWEKVASLVLGRLRNSKALITSIDQISADLALVLERYLERDLESLMMQVIPVLNLDQVIADKVNATSPADLEQAIQQIVRQELQAIVNLGGLLGFLVGCVQVLFLLG.

2 helical membrane passes run 1–21 (MAFW…YFTN) and 385–405 (IVNL…LFLL).

The protein belongs to the UPF0754 family.

It is found in the cell inner membrane. The chain is UPF0754 membrane protein CYB_2931 from Synechococcus sp. (strain JA-2-3B'a(2-13)) (Cyanobacteria bacterium Yellowstone B-Prime).